The following is a 1031-amino-acid chain: Serine-repeat antigen protein 6 (1031 aa).

A signal peptide spans 1–24 (MICPIFFLYIINVLFTQYFIKCEG). N-linked (GlcNAc...) asparagine glycosylation occurs at asparagine 74. Low complexity predominate over residues 91 to 101 (KVVSSSESGKG). Residues 91 to 163 (KVVSSSESGK…TESSSETLNK (73 aa)) are disordered. Positions 104 to 139 (VSHTKVTSEGLSDTQPNVTQSVSSSTHTPGSLDSTM) are enriched in polar residues. Residue asparagine 120 is glycosylated (N-linked (GlcNAc...) asparagine). Low complexity predominate over residues 140-158 (STEQHSSVSQSSLPTESSS). The N-linked (GlcNAc...) asparagine glycan is linked to asparagine 449. The tract at residues 490-567 (TLPSESPSES…GDTNYVYDFD (78 aa)) is disordered. A compositionally biased stretch (low complexity) spans 492-505 (PSESPSESSSKSDS). Residues 511–535 (NDKDKNEDKDDMSKNSKEEFKNDDK) show a composition bias toward basic and acidic residues. The N-linked (GlcNAc...) asparagine glycan is linked to asparagine 544. Residues 554 to 564 (NINNGDTNYVY) are compositionally biased toward low complexity. The N-linked (GlcNAc...) asparagine glycan is linked to asparagine 573. Cysteine 644 is a catalytic residue. An N-linked (GlcNAc...) asparagine glycan is attached at asparagine 674. Active-site residues include histidine 810 and asparagine 835. N-linked (GlcNAc...) asparagine glycosylation is found at asparagine 929 and asparagine 974.

This sequence belongs to the peptidase C1 family. Post-translationally, just prior to merozoite egress from host erythrocytes, proteolytically cleaved by SUB1 to generate the active 75kDa form.

The protein resides in the parasitophorous vacuole lumen. It localises to the parasitophorous vacuole membrane. Functionally, cysteine protease which plays an essential role in merozoite egress from host erythrocytes. May cleave host SPTB/beta spectrin and ANK1/ankyrin-1 which disrupts host erythrocyte actin cytoskeleton and leads to host erythrocyte cell membrane rupture. In Plasmodium falciparum (isolate 3D7), this protein is Serine-repeat antigen protein 6.